The following is a 332-amino-acid chain: Malate dehydrogenase 1, cytoplasmic (332 aa).

NAD(+) is bound by residues 16–17 (QI) and aspartate 43. A Methionine sulfoxide modification is found at methionine 56. NAD(+) is bound at residue glycine 90. Methionine 97 carries the post-translational modification Methionine sulfoxide. Arginine 99 is an oxaloacetate binding site. Glutamine 113 contributes to the NAD(+) binding site. Lysine 119 participates in a covalent cross-link: Glycyl lysine isopeptide (Lys-Gly) (interchain with G-Cter in ubiquitin). Asparagine 132 contributes to the NAD(+) binding site. Oxaloacetate contacts are provided by asparagine 132, arginine 163, histidine 188, and serine 243. The Proton acceptor role is filled by histidine 188.

Belongs to the LDH/MDH superfamily. MDH type 2 family. As to quaternary structure, forms a homodimer. Forms a disulfide-linked homodimer upon oxidation. Interacts with 14-3-3-like proteins GRF1 GRF3 and GRF8. Interacts with TRX1, TRX2, TRX3, TRX4 and TRX5. In terms of tissue distribution, expressed in rosette leaves.

The protein localises to the cytoplasm. It catalyses the reaction (S)-malate + NAD(+) = oxaloacetate + NADH + H(+). With respect to regulation, decreased activity upon treatment with hydrogen peroxide. Functionally, catalyzes a reversible NAD-dependent dehydrogenase reaction involved in central metabolism and redox homeostasis between organellar compartments. This is Malate dehydrogenase 1, cytoplasmic (MDH1) from Arabidopsis thaliana (Mouse-ear cress).